Here is a 140-residue protein sequence, read N- to C-terminus: Gastrula zinc finger protein XlCGF49.1 (140 aa).

C2H2-type zinc fingers lie at residues 6–28, 34–56, 62–84, 90–112, and 118–140; these read FTCM…YKIH, FTCM…YKMH, FSCS…QKIH, YACT…WKIH, and FSCT…QKMH.

It belongs to the krueppel C2H2-type zinc-finger protein family.

It localises to the nucleus. In terms of biological role, may be involved in transcriptional regulation. This chain is Gastrula zinc finger protein XlCGF49.1, found in Xenopus laevis (African clawed frog).